The sequence spans 119 residues: MVSALITVAVIAWCAQLALGGWQISRFNRAFDTLCQQGRVGVGRSSGRFKPRVVVAIALDDQQRIVDTLFMKGLTVFARPQKIPAITGMHAGDLQPDVIFPHDPLSQNALSLALKLKRG.

The segment at residues glutamine 23 to arginine 29 is a DNA-binding region (H-T-H motif).

Functionally, positive regulator for glucitol operon expression. This Escherichia coli (strain K12) protein is Glucitol operon activator protein (gutM).